The primary structure comprises 325 residues: Ribosomal RNA small subunit methyltransferase H (325 aa).

S-adenosyl-L-methionine-binding positions include 42–44, D62, F86, D105, and Q112; that span reads GGH.

This sequence belongs to the methyltransferase superfamily. RsmH family.

It is found in the cytoplasm. It catalyses the reaction cytidine(1402) in 16S rRNA + S-adenosyl-L-methionine = N(4)-methylcytidine(1402) in 16S rRNA + S-adenosyl-L-homocysteine + H(+). Its function is as follows. Specifically methylates the N4 position of cytidine in position 1402 (C1402) of 16S rRNA. This chain is Ribosomal RNA small subunit methyltransferase H, found in Cupriavidus metallidurans (strain ATCC 43123 / DSM 2839 / NBRC 102507 / CH34) (Ralstonia metallidurans).